The primary structure comprises 412 residues: MSDEFIDINNYIAIVYTYKTVGISKLYEHYVKDQELLLLKGLIKGEISVLQTCNRAETYLYTYNKEEFKDFLQKLDEIHGKQISKDAMILKGEDAVKHLFEVASGLDSLAIGEYEILRQLKESIEKSKKLGLSSEKLEFLFKNAIKVGRKIRQQTEISKGKTGIYALAVEYAKHVSNNNIGNVKIAIVGAGEIGNKLALMLKNEGAQNVTIFNRTYEKALEVANKYGFKAEPLDFYKINNYDIVFVAIYYDKKINLPNPKLVIDLSVPQIVLGNNVITLENLRSISDKIMETKILSLQKAEELIHIEIENFKNEIIKYNQNRLISKFMKRIEDIREAEINRAYAEILKHANDKEEIKNIIDKMTNSMLKKIFSPLFETVRKNEDMANYINNIFEILSNGNISNSKTEEAKEK.

Residues 52–55, Ser-108, 113–115, and Gln-119 contribute to the substrate site; these read TCNR and EYE. The Nucleophile role is filled by Cys-53. Residue 189 to 194 participates in NADP(+) binding; sequence GAGEIG.

Belongs to the glutamyl-tRNA reductase family. As to quaternary structure, homodimer.

It carries out the reaction (S)-4-amino-5-oxopentanoate + tRNA(Glu) + NADP(+) = L-glutamyl-tRNA(Glu) + NADPH + H(+). The protein operates within porphyrin-containing compound metabolism; protoporphyrin-IX biosynthesis; 5-aminolevulinate from L-glutamyl-tRNA(Glu): step 1/2. In terms of biological role, catalyzes the NADPH-dependent reduction of glutamyl-tRNA(Glu) to glutamate 1-semialdehyde (GSA). The sequence is that of Glutamyl-tRNA reductase from Sulfurisphaera tokodaii (strain DSM 16993 / JCM 10545 / NBRC 100140 / 7) (Sulfolobus tokodaii).